The chain runs to 399 residues: Tryptophan synthase beta chain (399 aa).

Position 92 is an N6-(pyridoxal phosphate)lysine (K92).

This sequence belongs to the TrpB family. Tetramer of two alpha and two beta chains. Pyridoxal 5'-phosphate serves as cofactor.

It catalyses the reaction (1S,2R)-1-C-(indol-3-yl)glycerol 3-phosphate + L-serine = D-glyceraldehyde 3-phosphate + L-tryptophan + H2O. The protein operates within amino-acid biosynthesis; L-tryptophan biosynthesis; L-tryptophan from chorismate: step 5/5. The beta subunit is responsible for the synthesis of L-tryptophan from indole and L-serine. The chain is Tryptophan synthase beta chain from Legionella pneumophila subsp. pneumophila (strain Philadelphia 1 / ATCC 33152 / DSM 7513).